Consider the following 364-residue polypeptide: Carbamoyl phosphate synthase pyrimidine-specific small chain (364 aa).

Residues 1–171 (MKRRLVLENG…AYPSPGRGKR (171 aa)) are CPSase. 3 residues coordinate L-glutamine: Ser-45, Gly-219, and Gly-221. The region spanning 171–356 (RIVLVDFGMK…IEMIETTEKE (186 aa)) is the Glutamine amidotransferase type-1 domain. Cys-246 functions as the Nucleophile in the catalytic mechanism. The L-glutamine site is built by Leu-247, Gln-250, Asn-288, Gly-290, and Tyr-291. Catalysis depends on residues His-329 and Glu-331.

Belongs to the CarA family. As to quaternary structure, composed of two chains; the small (or glutamine) chain promotes the hydrolysis of glutamine to ammonia, which is used by the large (or ammonia) chain to synthesize carbamoyl phosphate. Tetramer of heterodimers (alpha,beta)4. Interacts with BrxC.

It carries out the reaction hydrogencarbonate + L-glutamine + 2 ATP + H2O = carbamoyl phosphate + L-glutamate + 2 ADP + phosphate + 2 H(+). The enzyme catalyses L-glutamine + H2O = L-glutamate + NH4(+). The protein operates within pyrimidine metabolism; UMP biosynthesis via de novo pathway; (S)-dihydroorotate from bicarbonate: step 1/3. Functionally, small subunit of the glutamine-dependent carbamoyl phosphate synthetase (CPSase). CPSase catalyzes the formation of carbamoyl phosphate from the ammonia moiety of glutamine, carbonate, and phosphate donated by ATP, constituting the first step of the biosynthetic pathway leading to arginine and/or urea. The small subunit (glutamine amidotransferase) binds and cleaves glutamine to supply the large subunit with the substrate ammonia. This is Carbamoyl phosphate synthase pyrimidine-specific small chain from Bacillus subtilis (strain 168).